Consider the following 131-residue polypeptide: MASRMGMVAIVSLFVCALAASTSVNANVWQTDDIPVVNSNMVRHSNMERQQQQGGFIGHRPRLASFNRASNQDGDRKRTVPSGPDHMHHSIPSHTPQHPPVYVQALYEDDRSRTSSGPSKSIGPPPLSDRY.

Positions 1 to 26 are cleaved as a signal peptide; it reads MASRMGMVAIVSLFVCALAASTSVNA. Residues 49–131 are disordered; that stretch reads RQQQQGGFIG…IGPPPLSDRY (83 aa). Hydroxyproline occurs at positions 81 and 84. O-linked (Ara...) hydroxyproline glycosylation is present at Pro-84.

The protein belongs to the CLV3/ESR signal peptide family. In terms of processing, the O-glycosylation (arabinosylation) of the hydroxyproline Pro-84 enhances binding affinity of the ESR1p peptide for its receptor. As to expression, seed endosperm.

The protein resides in the secreted. It is found in the extracellular space. Extracellular signal peptide that regulates cell fate. This is CLAVATA3/ESR (CLE)-related protein ESR1 from Zea mays (Maize).